Consider the following 980-residue polypeptide: Envelope glycoprotein B (980 aa).

Polar residues predominate over residues 1–14 (MSSGCRSVGGSTWG). Disordered regions lie at residues 1 to 20 (MSSGCRSVGGSTWGNWRGDG) and 88 to 118 (TTPSPPTSTPTSMSTHSHGTVDPTLLPTETP). The N-terminal stretch at 1-86 (MSSGCRSVGG…LFGSCVVRAV (86 aa)) is a signal peptide. Residues 87–849 (PTTPSPPTST…SGIASFLNNP (763 aa)) are Virion surface-facing. Residues 96-118 (TPTSMSTHSHGTVDPTLLPTETP) show a composition bias toward low complexity. 5 cysteine pairs are disulfide-bonded: C140/C647, C157/C603, C231/C296, C389/C437, and C668/C708. N-linked (GlcNAc...) asparagine; by host glycosylation occurs at N165. The involved in fusion and/or binding to host membrane stretch occupies residues 197–203 (VWKGYSH). An N-linked (GlcNAc...) asparagine; by host glycan is attached at N275. The segment at 282 to 290 (GWMPWRHYT) is involved in fusion and/or binding to host membrane. N-linked (GlcNAc...) asparagine; by host glycosylation is found at N380, N423, N497, N514, N515, and N560. Low complexity predominate over residues 505–516 (LLNPNANNNNNT). The segment at 505–535 (LLNPNANNNNNTTRRRRSLLSVPEPQPTQDG) is disordered. N727 and N749 each carry an N-linked (GlcNAc...) asparagine; by host glycan. Hydrophobic membrane proximal region stretches follow at residues 794-847 (IDSV…SFLN) and 823-843 (AVGTLVLGAAGAVVSTVSGIA). The chain crosses the membrane as a helical span at residues 850–870 (FGGLAIGLLVIAGLVAAFFAY). Topologically, residues 871-980 (RYVMQIRSNP…NDTMENEKMV (110 aa)) are intravirion. The short motif at 925–928 (YMSM) is the Golgi targeting element. N-linked (GlcNAc...) asparagine; by host glycosylation is present at N952. The short motif at 965 to 968 (YTRL) is the Internalization motif element. Residue N971 is glycosylated (N-linked (GlcNAc...) asparagine; by host).

Belongs to the herpesviridae glycoprotein B family. Homotrimer; disulfide-linked. Binds to heparan sulfate proteoglycans. Interacts with gH/gL heterodimer. Post-translationally, a proteolytic cleavage by host furin generates two subunits that remain linked by disulfide bonds.

The protein localises to the virion membrane. The protein resides in the host cell membrane. Its subcellular location is the host endosome membrane. It localises to the host Golgi apparatus membrane. Its function is as follows. Envelope glycoprotein that forms spikes at the surface of virion envelope. Essential for the initial attachment to heparan sulfate moieties of the host cell surface proteoglycans. Involved in fusion of viral and cellular membranes leading to virus entry into the host cell. Following initial binding to its host receptors, membrane fusion is mediated by the fusion machinery composed at least of gB and the heterodimer gH/gL. May be involved in the fusion between the virion envelope and the outer nuclear membrane during virion egress. The polypeptide is Envelope glycoprotein B (Equine herpesvirus 1 (strain HVS25A) (EHV-1)).